Consider the following 613-residue polypeptide: Laccase 1 (613 aa).

The first 20 residues, methionine 1–alanine 20, serve as a signal peptide directing secretion. Plastocyanin-like domains are found at residues isoleucine 29 to lysine 142 and tyrosine 171 to proline 359. N-linked (GlcNAc...) asparagine glycosylation occurs at asparagine 74. Residues histidine 78, histidine 80, histidine 122, and histidine 124 each contribute to the Cu cation site. N-linked (GlcNAc...) asparagine glycans are attached at residues asparagine 256, asparagine 279, asparagine 444, asparagine 468, and asparagine 484. Residues asparagine 468–glycine 598 enclose the Plastocyanin-like 3 domain. 3 residues coordinate Cu cation: histidine 506, histidine 509, and histidine 511. Asparagine 526 carries an N-linked (GlcNAc...) asparagine glycan. Residues histidine 580, cysteine 581, histidine 582, and histidine 586 each contribute to the Cu cation site.

The protein belongs to the multicopper oxidase family. Cu cation serves as cofactor.

It is found in the cell surface. It participates in pigment biosynthesis. Functionally, laccase; part of the Pks1 gene cluster that mediates the biosynthesis of an anthraquinone derivative pigment that contributes to conidial pigmentation that provides protection from UV radiation, heat and cold stress. The polyketide synthase Pks1 produces 1-acetyl-2,4,6,8-tetrahydroxy-9,10-anthraquinone though condensation of acetyl-CoA with malonyl-CoA. The dehydratase EthD and the laccase Mlac1 further convert the anthraquinone derivative into the final conidial pigment. The protein is Laccase 1 of Metarhizium robertsii (strain ARSEF 23 / ATCC MYA-3075) (Metarhizium anisopliae (strain ARSEF 23)).